The chain runs to 719 residues: Protein psiI (719 aa).

The first 19 residues, 1 to 19 (MKIIFNLLILFSLVNFINS), serve as a signal peptide directing secretion. Residues 20-658 (QSTTQATTLK…ICQTGAIVST (639 aa)) lie on the Extracellular side of the membrane. N-linked (GlcNAc...) asparagine glycosylation is found at Asn-62, Asn-105, Asn-118, Asn-151, Asn-315, Asn-379, Asn-454, Asn-488, Asn-500, Asn-538, Asn-592, and Asn-629. One can recognise a PA14 domain in the interval 119 to 261 (LTLNPSTGTY…YDYCGVCYGD (143 aa)). Residues 659 to 679 (AVVASVVVVGAVVLGAAIFAG) form a helical membrane-spanning segment. Topologically, residues 680–719 (KKGYDHWKANQGQVFASSNANPLYQQSNNGGENALFEAPQ) are cytoplasmic.

Belongs to the prespore-cell-inducing factor family.

Its subcellular location is the membrane. This Dictyostelium discoideum (Social amoeba) protein is Protein psiI (psiI).